A 135-amino-acid polypeptide reads, in one-letter code: RuBisCO chaperone RbcX (135 aa).

Residues 103-135 form a disordered region; sequence QHLERMTQVSLSHPSPESEQQQFSDPDWDNLAS. The span at 109-126 shows a compositional bias: polar residues; it reads TQVSLSHPSPESEQQQFS.

The protein belongs to the RbcX family. In terms of assembly, homodimer. Interacts with the exposed C-terminal peptide of RbcL ('Glu-459-Asp-468'); binds 1 RbcL peptide per homodimer. Contacts a second RbcL monomer via its peripheral polar surface. A slightly longer RbcL peptide binds to RbcX2 with a higher affinity.

Its subcellular location is the carboxysome. The protein localises to the cytoplasm. An RbcL-specific chaperone. The central cleft of the RbcX homodimer (RbcX2) binds the C-terminus of an RbcL monomer, stabilizing the C-terminus and probably preventing its reassociation with chaperonin GroEL-ES. At the same time the peripheral region of RbcX2 binds a second RbcL monomer, bridging the RbcL homodimers in the correct orientation. The RbcX2(2)-bound RbcL dimers then assemble into the RbcL8 core (RbcL8-(RbcX2)8). RbcS binding triggers the release of RbcX2. Functionally, required for optimal reconstitution of RuBisCO upon expression of rbcL-rbcS subunits in E.coli. The protein is RuBisCO chaperone RbcX of Anabaena sp. (strain CA / ATCC 33047).